A 66-amino-acid chain; its full sequence is Large ribosomal subunit protein bL33c (66 aa).

The protein belongs to the bacterial ribosomal protein bL33 family.

The protein resides in the plastid. The protein localises to the chloroplast. This is Large ribosomal subunit protein bL33c from Arabis hirsuta (Hairy rock-cress).